A 95-amino-acid polypeptide reads, in one-letter code: Aspartyl/glutamyl-tRNA(Asn/Gln) amidotransferase subunit C (95 aa).

The protein belongs to the GatC family. Heterotrimer of A, B and C subunits.

The catalysed reaction is L-glutamyl-tRNA(Gln) + L-glutamine + ATP + H2O = L-glutaminyl-tRNA(Gln) + L-glutamate + ADP + phosphate + H(+). The enzyme catalyses L-aspartyl-tRNA(Asn) + L-glutamine + ATP + H2O = L-asparaginyl-tRNA(Asn) + L-glutamate + ADP + phosphate + 2 H(+). In terms of biological role, allows the formation of correctly charged Asn-tRNA(Asn) or Gln-tRNA(Gln) through the transamidation of misacylated Asp-tRNA(Asn) or Glu-tRNA(Gln) in organisms which lack either or both of asparaginyl-tRNA or glutaminyl-tRNA synthetases. The reaction takes place in the presence of glutamine and ATP through an activated phospho-Asp-tRNA(Asn) or phospho-Glu-tRNA(Gln). The polypeptide is Aspartyl/glutamyl-tRNA(Asn/Gln) amidotransferase subunit C (Pelobacter propionicus (strain DSM 2379 / NBRC 103807 / OttBd1)).